A 276-amino-acid polypeptide reads, in one-letter code: uncharacterized protein (276 aa).

Positions 1–29 are cleaved as a signal peptide; it reads MKSHVRSFKTYIRDEIIKKGGWVNAHAHA.

The protein belongs to the metallo-dependent hydrolases superfamily.

This is an uncharacterized protein from Haemophilus influenzae (strain ATCC 51907 / DSM 11121 / KW20 / Rd).